Reading from the N-terminus, the 97-residue chain is uncharacterized protein (97 aa).

This is an uncharacterized protein from Sulfolobus islandicus filamentous virus (isolate Iceland/Hveragerdi) (SIFV).